The primary structure comprises 589 residues: MASEIHMLQPMCLIENTEAHLVINQEALRILSAINQPVVVVAIVGLYRTGKSYLMNKLAGKRTGFSLGSTVQSHTKGIWMWCVPHPKKAGQTLVLLDTEGLEDVEKGDNQNDCWIFALAVLLSSTFVYNSMGTINQQAMDQLHYVTELTDLIKSKSSPDQSGIDDSANFVGFFPTFVWALRDFSLELEVNGKLVTPDEYLEHSLTLKKGADKKTKSFNEPRLCIRKFFPKRKCFIFDRPALRKQLCKLETLGEEELCSEFVEQVAEFTSYIFSYSAVKTLSGGIIVNGPRLKSLVQTYVGAISSGSLPCMESAVLTLAQIENSAAVQKAITHYEEQMNQKIQMPTETLQELLDLHRLIEREAIEIFLKNSFKDVDQKFQTELGNLLISKRDAFIKKNSDVSSAHCSDLIEDIFGPLEEEVKQGTFSKPGGYFLFLQMRQELEKKYNQAPGKGLEAEAVLKKYFESKEDIVETLLKTDQSLTEAAKEIEVERIKAETAEAANRELAEKQEKFELMMQQKEESYQEHVRQLTEKMKEEQKKLIEEQDNIIALKLREQEKFLREGYENESKKLLREIENMKRRQSPGKCTIL.

Residues 1–309 form a GTPase domain (Globular) region; sequence MASEIHMLQP…GAISSGSLPC (309 aa). Positions 35–276 constitute a GB1/RHD3-type G domain; that stretch reads NQPVVVVAIV…FTSYIFSYSA (242 aa). GTP is bound by residues 45-52, 181-182, and Leu245; these read GLYRTGKS and RD. At Cys586 the chain carries Cysteine methyl ester. The S-geranylgeranyl cysteine moiety is linked to residue Cys586. Residues 587 to 589 constitute a propeptide, removed in mature form; that stretch reads TIL.

It belongs to the TRAFAC class dynamin-like GTPase superfamily. GB1/RHD3 GTPase family. GB1 subfamily. Homodimer; homodimerization occurs upon GTP-binding and is required for the association with membranous structures. Heterodimer with other family members, including GBP1, GBP3, GBP4 and GBP5. Isoprenylation is required for proper subcellular location. In terms of tissue distribution, widely expressed.

It is found in the cytoplasmic vesicle membrane. The protein localises to the golgi apparatus membrane. Its subcellular location is the cytoplasm. It localises to the perinuclear region. It catalyses the reaction GTP + H2O = GDP + phosphate + H(+). In terms of biological role, interferon (IFN)-inducible GTPase that plays important roles in innate immunity against a diverse range of bacterial, viral and protozoan pathogens. Hydrolyzes GTP to GMP in 2 consecutive cleavage reactions, but the major reaction product is GDP. Following infection, recruited to the pathogen-containing vacuoles or vacuole-escaped bacteria and acts as a positive regulator of inflammasome assembly by promoting the release of inflammasome ligands from bacteria. Acts by promoting lysis of pathogen-containing vacuoles, releasing pathogens into the cytosol. Following pathogen release in the cytosol, promotes recruitment of proteins that mediate bacterial cytolysis: this liberates ligands that are detected by inflammasomes, such as lipopolysaccharide (LPS) that activates the non-canonical CASP4/CASP11 inflammasome or double-stranded DNA (dsDNA) that activates the AIM2 inflammasome. Confers protection to the protozoan pathogen Toxoplasma gondii. Independently of its GTPase activity, acts as an inhibitor of various viruses infectivity by inhibiting FURIN-mediated maturation of viral envelope proteins. The sequence is that of Guanylate-binding protein 2 (Gbp2) from Rattus norvegicus (Rat).